Here is a 346-residue protein sequence, read N- to C-terminus: L-threonine dehydratase catabolic TdcB (346 aa).

59–60 (FT) lines the AMP pocket. Lys-64 carries the post-translational modification N6-(pyridoxal phosphate)lysine. AMP contacts are provided by residues Gln-94, 125 to 126 (GY), and Asn-321.

It belongs to the serine/threonine dehydratase family. In terms of assembly, in the native structure, TdcB is in a dimeric form, whereas in the TdcB-AMP complex, it exists in a tetrameric form (dimer of dimers). Requires pyridoxal 5'-phosphate as cofactor.

The catalysed reaction is L-threonine = 2-oxobutanoate + NH4(+). It participates in amino-acid degradation; L-threonine degradation via propanoate pathway; propanoate from L-threonine: step 1/4. Its activity is regulated as follows. Each protein molecule can bind up to four molecules of AMP, which act as an allosteric activator to the enzyme. Functionally, catalyzes the anaerobic formation of alpha-ketobutyrate and ammonia from threonine in a two-step reaction. The first step involved a dehydration of threonine and a production of enamine intermediates (aminocrotonate), which tautomerizes to its imine form (iminobutyrate). Both intermediates are unstable and short-lived. The second step is the nonenzymatic hydrolysis of the enamine/imine intermediates to form 2-ketobutyrate and free ammonia. In the low water environment of the cell, the second step is accelerated by RidA. In Staphylococcus aureus (strain USA300), this protein is L-threonine dehydratase catabolic TdcB (tdcB).